A 349-amino-acid chain; its full sequence is Selenide, water dikinase (349 aa).

Residue C17 is part of the active site. Residues K20 and 48 to 50 each bind ATP; that span reads YFD. D51 contributes to the Mg(2+) binding site. ATP contacts are provided by residues D68, D91, and 139–141; that span reads GHS. D91 lines the Mg(2+) pocket. D229 serves as a coordination point for Mg(2+).

Belongs to the selenophosphate synthase 1 family. Class I subfamily. In terms of assembly, homodimer. The cofactor is Mg(2+).

It carries out the reaction hydrogenselenide + ATP + H2O = selenophosphate + AMP + phosphate + 2 H(+). In terms of biological role, synthesizes selenophosphate from selenide and ATP. This is Selenide, water dikinase from Nitrosomonas eutropha (strain DSM 101675 / C91 / Nm57).